Reading from the N-terminus, the 618-residue chain is Cationic amino acid transporter 3 (618 aa).

Residues 1 to 36 (MLWQALRRFGQKLVRRRVLELGMGETRLARCLSTLD) lie on the Cytoplasmic side of the membrane. A helical transmembrane segment spans residues 37-57 (LVALGVGSTLGAGVYVLAGEV). Over 58-61 (AKDK) the chain is Extracellular. A helical membrane pass occupies residues 62-82 (AGPSIVICFLVAALSSVLAGL). Topologically, residues 83 to 107 (CYAEFGARVPGSGSAYLYSYVTVGE) are cytoplasmic. The helical transmembrane segment at 108–128 (LWAFTTGWNLILSYVIGTASV) threads the bilayer. The Extracellular segment spans residues 129–162 (ARAWSSAFDNLIGNHISRTLKGTILLKMPHVLAE). A helical membrane pass occupies residues 163–183 (YPDFFALALVLLLTGLLVLGA). Residues 184 to 191 (SKSALVTK) lie on the Cytoplasmic side of the membrane. The chain crosses the membrane as a helical span at residues 192–212 (VFTGMNLLVLSFVIISGFIKG). Residues 213 to 244 (ELRNWKLTKEDYCLTMSESNGTCSLDSMGSGG) lie on the Extracellular side of the membrane. N-linked (GlcNAc...) asparagine glycosylation occurs at N232. A helical transmembrane segment spans residues 245–265 (FMPFGLEGILRGAATCFYAFV). The Cytoplasmic segment spans residues 266-285 (GFDCIATTGEEAQNPQRSIP). A helical transmembrane segment spans residues 286–306 (MGIVISMFICFLAYFGVSSAL). Residues 307–335 (TLMMPYYKLHPESPLPEAFSYVGWEPARY) are Extracellular-facing. A helical membrane pass occupies residues 336–356 (LVAIGSLCALSTSLLGSMFPM). Residues 357–380 (PRVMYSMAEDGLLFRVLAKVHSVT) lie on the Cytoplasmic side of the membrane. A helical transmembrane segment spans residues 381 to 401 (HIPIVATLVSGVIAAFMAFLF). Residues 402–406 (ELTDL) are Extracellular-facing. The chain crosses the membrane as a helical span at residues 407-427 (VDLMSIGTLLAHSLVSICVLI). The Cytoplasmic portion of the chain corresponds to 428–474 (LRYQPDQEMKSVEEEMELQEETLEAEKLTVQALFCPVNSIPTLLSGR). The helical transmembrane segment at 475-495 (VVYVCSSLLAVLLTVLCLVLT) threads the bilayer. The Extracellular portion of the chain corresponds to 496–506 (WWTTPLRSGDP). The helical transmembrane segment at 507–527 (VWVTVVVLILGLILAISGVIW) threads the bilayer. The Cytoplasmic segment spans residues 528 to 539 (RQPQNRTPLHFK). Residues 540 to 560 (VPAVPLLPLVSIFVNVYLMMQ) form a helical membrane-spanning segment. Over 561-568 (MTAGTWAR) the chain is Extracellular. The chain crosses the membrane as a helical span at residues 569–589 (FGIWMLIGFAIYFGYGIQHSM). At 590 to 618 (KEVKNHQTLPKTRAQTIDLDLTTSCVHSI) the chain is on the cytoplasmic side. T605 bears the Phosphothreonine mark. S617 bears the Phosphoserine mark.

This sequence belongs to the amino acid-polyamine-organocation (APC) superfamily. Cationic amino acid transporter (CAT) (TC 2.A.3.3) family. N-glycosylated. Expressed in adult brain and in a wide variety of embryonic tissues.

It localises to the cell membrane. The catalysed reaction is L-arginine(in) = L-arginine(out). It carries out the reaction L-lysine(in) = L-lysine(out). The enzyme catalyses L-ornithine(in) = L-ornithine(out). Its function is as follows. Uniporter that mediates the uptake of cationic L-amino acids such as L-arginine, L-lysine and L-ornithine. The transport is sodium ions- and pH-independent, moderately trans-stimulated and is mediated by passive diffusion. The sequence is that of Cationic amino acid transporter 3 from Mus musculus (Mouse).